Reading from the N-terminus, the 93-residue chain is Small ribosomal subunit protein uS19 (93 aa).

The protein belongs to the universal ribosomal protein uS19 family.

Functionally, protein S19 forms a complex with S13 that binds strongly to the 16S ribosomal RNA. This chain is Small ribosomal subunit protein uS19, found in Desulfitobacterium hafniense (strain Y51).